Reading from the N-terminus, the 207-residue chain is Dephospho-CoA kinase (207 aa).

A DPCK domain is found at 12–207 (LIGITGMIGG…LYSTLLGKML (196 aa)). 20 to 25 (GGGKST) lines the ATP pocket.

This sequence belongs to the CoaE family.

Its subcellular location is the cytoplasm. It carries out the reaction 3'-dephospho-CoA + ATP = ADP + CoA + H(+). It functions in the pathway cofactor biosynthesis; coenzyme A biosynthesis; CoA from (R)-pantothenate: step 5/5. Catalyzes the phosphorylation of the 3'-hydroxyl group of dephosphocoenzyme A to form coenzyme A. The polypeptide is Dephospho-CoA kinase (Leptospira interrogans serogroup Icterohaemorrhagiae serovar Lai (strain 56601)).